The chain runs to 527 residues: Anthranilate synthase component 1 1 (527 aa).

Serine 52 serves as a coordination point for L-tryptophan. Positions 53–72 (AEKTPASDPDGAFTPDTTTE) are disordered. 298–300 (PYM) contacts L-tryptophan. 333–334 (GT) contributes to the chorismate binding site. Residue glutamate 360 participates in Mg(2+) binding. Chorismate contacts are provided by residues tyrosine 448, arginine 468, 486-488 (GAG), and glycine 488. Glutamate 501 is a Mg(2+) binding site.

Belongs to the anthranilate synthase component I family. In terms of assembly, tetramer of two components I and two components II. It depends on Mg(2+) as a cofactor.

It catalyses the reaction chorismate + L-glutamine = anthranilate + pyruvate + L-glutamate + H(+). Its pathway is amino-acid biosynthesis; L-tryptophan biosynthesis; L-tryptophan from chorismate: step 1/5. The protein is Anthranilate synthase component 1 1 (trpE1) of Halobacterium salinarum (strain ATCC 700922 / JCM 11081 / NRC-1) (Halobacterium halobium).